The chain runs to 376 residues: Transcription initiation factor IIA subunit 1 (376 aa).

Ala2 is modified (N-acetylalanine). 2 stretches are compositionally biased toward low complexity: residues 69–79 (QVQQQHQPQQQ) and 89–105 (QAQPQQTVPQQAQTQQV). 3 disordered regions span residues 69–107 (QVQQQHQPQQQQHHHHHHHQQAQPQQTVPQQAQTQQVLI), 247–266 (QAQITATGQQQPQAQPAQTQ), and 274–329 (DGTG…QELF). Ser280, Ser281, Ser316, and Ser321 each carry phosphoserine; by TAF1. Positions 280 to 329 (SSEEDEDEEEDYDDDEEEDKEKDGAEDGQVEEEPLNSEDDVSDEEGQELF) are enriched in acidic residues. Residues His343 and Arg344 each contribute to the DNA site.

This sequence belongs to the TFIIA subunit 1 family. In terms of assembly, TFIIA is a heterodimer of the large unprocessed subunit 1 and a small subunit gamma. It was originally believed to be a heterotrimer of an alpha (p35), a beta (p19) and a gamma subunit (p12). TFIIA forms a complex with TBP. Part of TBP-based Pol II pre-initiation complex (PIC), in which Pol II core assembles with general transcription factors and other specific initiation factors including GTF2E1, GTF2E2, GTF2F1, GTF2F2, TCEA1, ERCC2, ERCC3, GTF2H2, GTF2H3, GTF2H4, GTF2H5, GTF2A1, GTF2A2, GTF2B and TBP; this large multi-subunit PIC complex mediates DNA unwinding and targets Pol II core to the transcription start site where the first phosphodiester bond forms. The alpha and beta subunits are postranslationally produced from the precursor form by TASP1. The cleavage promotes proteasomal degradation.

The protein localises to the nucleus. Functionally, TFIIA is a component of the transcription machinery of RNA polymerase II and plays an important role in transcriptional activation. TFIIA in a complex with TBP mediates transcriptional activity. This chain is Transcription initiation factor IIA subunit 1 (GTF2A1), found in Homo sapiens (Human).